We begin with the raw amino-acid sequence, 213 residues long: Thymidylate kinase (213 aa).

10 to 17 (GLEGAGKT) is a binding site for ATP.

The protein belongs to the thymidylate kinase family.

The catalysed reaction is dTMP + ATP = dTDP + ADP. Phosphorylation of dTMP to form dTDP in both de novo and salvage pathways of dTTP synthesis. This is Thymidylate kinase from Salmonella dublin (strain CT_02021853).